A 193-amino-acid chain; its full sequence is FMN-dependent NADH:quinone oxidoreductase 1 (193 aa).

FMN is bound by residues Ser-9, Ser-15 to Ser-17, and Met-85 to Phe-88.

Belongs to the azoreductase type 1 family. In terms of assembly, homodimer. It depends on FMN as a cofactor.

It catalyses the reaction 2 a quinone + NADH + H(+) = 2 a 1,4-benzosemiquinone + NAD(+). It carries out the reaction N,N-dimethyl-1,4-phenylenediamine + anthranilate + 2 NAD(+) = 2-(4-dimethylaminophenyl)diazenylbenzoate + 2 NADH + 2 H(+). In terms of biological role, quinone reductase that provides resistance to thiol-specific stress caused by electrophilic quinones. Its function is as follows. Also exhibits azoreductase activity. Catalyzes the reductive cleavage of the azo bond in aromatic azo compounds to the corresponding amines. The polypeptide is FMN-dependent NADH:quinone oxidoreductase 1 (Xanthomonas axonopodis pv. citri (strain 306)).